The sequence spans 404 residues: Chorismate synthase (404 aa).

Positions 40 and 46 each coordinate NADP(+). Residues 135–137 (RAS), 256–257 (QA), Gly300, 315–319 (KPIST), and Arg341 each bind FMN.

It belongs to the chorismate synthase family. In terms of assembly, homotetramer. FMNH2 is required as a cofactor.

The catalysed reaction is 5-O-(1-carboxyvinyl)-3-phosphoshikimate = chorismate + phosphate. It participates in metabolic intermediate biosynthesis; chorismate biosynthesis; chorismate from D-erythrose 4-phosphate and phosphoenolpyruvate: step 7/7. Catalyzes the anti-1,4-elimination of the C-3 phosphate and the C-6 proR hydrogen from 5-enolpyruvylshikimate-3-phosphate (EPSP) to yield chorismate, which is the branch point compound that serves as the starting substrate for the three terminal pathways of aromatic amino acid biosynthesis. This reaction introduces a second double bond into the aromatic ring system. The chain is Chorismate synthase from Mycobacterium sp. (strain JLS).